A 105-amino-acid chain; its full sequence is Large ribosomal subunit protein bL21 (105 aa).

Belongs to the bacterial ribosomal protein bL21 family. Part of the 50S ribosomal subunit. Contacts protein L20.

In terms of biological role, this protein binds to 23S rRNA in the presence of protein L20. This is Large ribosomal subunit protein bL21 from Rhizobium rhizogenes (strain K84 / ATCC BAA-868) (Agrobacterium radiobacter).